A 293-amino-acid polypeptide reads, in one-letter code: Autophagy-related protein 36 (293 aa).

2 stretches are compositionally biased toward polar residues: residues 98-108 and 260-273; these read ISSDSNKNSPP and GETL…ASSS. Disordered regions lie at residues 98-121 and 250-273; these read ISSD…NIRS and SRSR…ASSS.

In terms of assembly, interacts with PEX3, ATG8 and ATG11.

The protein resides in the peroxisome. Functionally, required for autophagic breakdown of peroxisomes, called pexophagy, through linking peroxisomes to the autophagy apparatus. Involved in regulation of the glyoxylate cycle. The protein is Autophagy-related protein 36 (ATG36) of Saccharomyces cerevisiae (strain ATCC 204508 / S288c) (Baker's yeast).